Reading from the N-terminus, the 193-residue chain is Ion-translocating oxidoreductase complex subunit A (193 aa).

6 helical membrane passes run 5-25 (LLLF…FLGL), 39-59 (MGMG…AWLI), 63-83 (ILIP…VIAV), 102-122 (LLGI…VALL), 134-154 (ALYG…FAAI), and 171-191 (AIAL…NGLV).

Belongs to the NqrDE/RnfAE family. The complex is composed of six subunits: RsxA, RsxB, RsxC, RsxD, RsxE and RsxG.

It localises to the cell inner membrane. Part of a membrane-bound complex that couples electron transfer with translocation of ions across the membrane. Required to maintain the reduced state of SoxR. In Shigella sonnei (strain Ss046), this protein is Ion-translocating oxidoreductase complex subunit A.